We begin with the raw amino-acid sequence, 491 residues long: (1S)-1-hydroxy-luvungin A synthase CYP88A37 (491 aa).

A helical membrane pass occupies residues 5–25 (FSWLILALAIFIGTYAFVFGV). Cys439 is a heme binding site.

Belongs to the cytochrome P450 family. Heme serves as cofactor. As to expression, expressed in maturing fruits and in juice vesicles.

The protein localises to the membrane. It carries out the reaction luvungin A + reduced [NADPH--hemoprotein reductase] + O2 = (1S)-1-hydroxy-luvungin A + oxidized [NADPH--hemoprotein reductase] + H2O + H(+). Its pathway is secondary metabolite biosynthesis; terpenoid biosynthesis. Its function is as follows. Monooxygenase involved in the biosynthesis of limonoids triterpene natural products such as limonin, a compound with insecticidal activity responsible for the bitter taste in citrus. Catalyzes the conversion of luvungin A to (1S)-1-hydroxy-luvungin A. The protein is (1S)-1-hydroxy-luvungin A synthase CYP88A37 of Citrus sinensis (Sweet orange).